The following is a 496-amino-acid chain: Probable uroporphyrinogen-III C-methyltransferase (496 aa).

Belongs to the precorrin methyltransferase family.

It carries out the reaction uroporphyrinogen III + 2 S-adenosyl-L-methionine = precorrin-2 + 2 S-adenosyl-L-homocysteine + H(+). Functionally, siroheme synthase involved in methionine biosynthesis. This is Probable uroporphyrinogen-III C-methyltransferase from Schizosaccharomyces pombe (strain 972 / ATCC 24843) (Fission yeast).